The following is a 79-amino-acid chain: Exodeoxyribonuclease 7 small subunit (79 aa).

This sequence belongs to the XseB family. As to quaternary structure, heterooligomer composed of large and small subunits.

It is found in the cytoplasm. The catalysed reaction is Exonucleolytic cleavage in either 5'- to 3'- or 3'- to 5'-direction to yield nucleoside 5'-phosphates.. Bidirectionally degrades single-stranded DNA into large acid-insoluble oligonucleotides, which are then degraded further into small acid-soluble oligonucleotides. This chain is Exodeoxyribonuclease 7 small subunit, found in Dechloromonas aromatica (strain RCB).